The primary structure comprises 58 residues: Metallothionein-2B (58 aa).

Residues 1–29 are beta; it reads MPDPCCNDKCECKEGECKTGCKCKSCRCP. Residues Cys5, Cys6, Cys10, Cys12, Cys17, Cys21, Cys23, Cys26, Cys28, Cys31, Cys34, Cys38, Cys40, Cys46, Cys50, Cys54, Cys56, and Cys57 each coordinate a divalent metal cation. The alpha stretch occupies residues 30 to 58; that stretch reads PCDKCSSECKCTSKEECSKTCSKPCSCCP.

This sequence belongs to the metallothionein superfamily. Type 3 family.

Functionally, binds six divalent metal ions. Known to bind copper and cadmium. The polypeptide is Metallothionein-2B (Callinectes sapidus (Blue crab)).